A 357-amino-acid chain; its full sequence is tRNA-specific 2-thiouridylase MnmA (357 aa).

Residues Ala6–Ser13 and Leu32 contribute to the ATP site. Cys101 acts as the Nucleophile in catalysis. Cysteines 101 and 193 form a disulfide. Gly125 is an ATP binding site. The interval Lys143–Gln145 is interaction with tRNA. Cys193 (cysteine persulfide intermediate) is an active-site residue.

Belongs to the MnmA/TRMU family.

Its subcellular location is the cytoplasm. The catalysed reaction is S-sulfanyl-L-cysteinyl-[protein] + uridine(34) in tRNA + AH2 + ATP = 2-thiouridine(34) in tRNA + L-cysteinyl-[protein] + A + AMP + diphosphate + H(+). Catalyzes the 2-thiolation of uridine at the wobble position (U34) of tRNA, leading to the formation of s(2)U34. The polypeptide is tRNA-specific 2-thiouridylase MnmA (Mycolicibacterium vanbaalenii (strain DSM 7251 / JCM 13017 / BCRC 16820 / KCTC 9966 / NRRL B-24157 / PYR-1) (Mycobacterium vanbaalenii)).